Here is a 415-residue protein sequence, read N- to C-terminus: Acetate kinase (415 aa).

Asn-8 contributes to the Mg(2+) binding site. Position 15 (Lys-15) interacts with ATP. Arg-106 is a substrate binding site. The active-site Proton donor/acceptor is the Asp-163. Residues 222 to 226 (HLGNG), 296 to 298 (DLR), and 344 to 348 (GIGEN) each bind ATP. Mg(2+) is bound at residue Glu-397.

Belongs to the acetokinase family. Homodimer. Mg(2+) serves as cofactor. Requires Mn(2+) as cofactor.

The protein localises to the cytoplasm. It carries out the reaction acetate + ATP = acetyl phosphate + ADP. It functions in the pathway metabolic intermediate biosynthesis; acetyl-CoA biosynthesis; acetyl-CoA from acetate: step 1/2. Functionally, catalyzes the formation of acetyl phosphate from acetate and ATP. Can also catalyze the reverse reaction. This Thermosynechococcus vestitus (strain NIES-2133 / IAM M-273 / BP-1) protein is Acetate kinase.